Consider the following 450-residue polypeptide: Putative MYST-like histone acetyltransferase 1 (450 aa).

One can recognise a Tudor-knot domain in the interval 63–122 (LEVGTRVMCRWRDQKLHPVKVIERRKSSTSSSPADYEYYVHYTEFNRRLDEWVKLEQLDL). Residues 174 to 445 (TKVKNIAKIE…VDVSKLIWTP (272 aa)) form the MYST-type HAT domain. The segment at 207–232 (LFFCEFCLNFMKRKEQLQRHMKKCDL) adopts a C2HC MYST-type zinc-finger fold. Position 274 is an N6-acetyllysine; by autocatalysis (lysine 274). Residues 317-319 (ILT) and 324-330 (QRKGYGK) each bind acetyl-CoA. Catalysis depends on glutamate 350, which acts as the Proton donor/acceptor. Position 354 (serine 354) interacts with acetyl-CoA.

The protein belongs to the MYST (SAS/MOZ) family. In terms of processing, autoacetylation at Lys-274 is required for proper function.

The protein localises to the nucleus. It carries out the reaction L-lysyl-[protein] + acetyl-CoA = N(6)-acetyl-L-lysyl-[protein] + CoA + H(+). Histone acetyltransferase which may be involved in transcriptional activation. The protein is Putative MYST-like histone acetyltransferase 1 of Oryza sativa subsp. japonica (Rice).